A 557-amino-acid chain; its full sequence is UvrABC system protein C (557 aa).

The 76-residue stretch at 14–89 (EEPGVYIFKN…IKKYRPKYNV (76 aa)) folds into the GIY-YIG domain. The UVR domain occupies 194-229 (EEVFDYLKEKMETHSRMLDFENAAKYRDLLLNLSNV).

This sequence belongs to the UvrC family. Interacts with UvrB in an incision complex.

It is found in the cytoplasm. In terms of biological role, the UvrABC repair system catalyzes the recognition and processing of DNA lesions. UvrC both incises the 5' and 3' sides of the lesion. The N-terminal half is responsible for the 3' incision and the C-terminal half is responsible for the 5' incision. This chain is UvrABC system protein C, found in Thermotoga petrophila (strain ATCC BAA-488 / DSM 13995 / JCM 10881 / RKU-1).